Here is a 438-residue protein sequence, read N- to C-terminus: Hydrogenobyrinate a,c-diamide synthase (438 aa).

The GATase cobBQ-type domain maps to 247-438; that stretch reads RIALAEDAAF…TFFHAIAKGG (192 aa). C329 functions as the Nucleophile in the catalytic mechanism.

Belongs to the CobB/CbiA family. Requires Mg(2+) as cofactor.

It carries out the reaction hydrogenobyrinate + 2 L-glutamine + 2 ATP + 2 H2O = hydrogenobyrinate a,c-diamide + 2 L-glutamate + 2 ADP + 2 phosphate + 2 H(+). Its pathway is cofactor biosynthesis; adenosylcobalamin biosynthesis; cob(II)yrinate a,c-diamide from precorrin-2 (aerobic route): step 9/10. In terms of biological role, catalyzes the ATP-dependent amidation of the two carboxylate groups at positions a and c of hydrogenobyrinate, using either L-glutamine or ammonia as the nitrogen source. This Agrobacterium fabrum (strain C58 / ATCC 33970) (Agrobacterium tumefaciens (strain C58)) protein is Hydrogenobyrinate a,c-diamide synthase.